Consider the following 268-residue polypeptide: Proenkephalin-A (268 aa).

The first 24 residues, 1-24 (MARFLRLCTWLLVLGSCLLATVQA), serve as a signal peptide directing secretion. 3 disulfide bridges follow: Cys26–Cys48, Cys30–Cys52, and Cys33–Cys65. A disordered region spans residues 162–185 (GTGDNRAREGRHQESTDNDDNMSK). Basic and acidic residues predominate over residues 166–176 (NRAREGRHQES). Propeptides lie at residues 197-208 (SPQVEDEAKELQ) and 218-228 (VGRPEWWMDYQ). The residue at position 252 (Ser252) is a Phosphoserine.

This sequence belongs to the opioid neuropeptide precursor family. Post-translationally, proenkephalin-A is cleaved by CTSL to generate Met-enkephalin. In terms of processing, processed and degraded by ACE. Probably cleaved by ACE. Post-translationally, processed by ACE to generate Met-enkephalin in the nucleus accumbens of the brain. In terms of processing, the N-terminal domain contains 6 conserved cysteines thought to be involved in disulfide bonding and/or processing.

The protein localises to the cytoplasmic vesicle. It is found in the secretory vesicle. It localises to the chromaffin granule lumen. The protein resides in the secreted. In terms of biological role, neuropeptide that competes with and mimic the effects of opiate drugs. They play a role in a number of physiologic functions, including pain perception and responses to stress. Its function is as follows. Met-enkephalin-Arg-Phe neuropeptide acts as a strong ligand of Mu-type opioid receptor OPRM1. Met-enkephalin-Arg-Phe-binding to OPRM1 in the nucleus accumbens of the brain increases activation of OPRM1, leading to long-term synaptic depression of glutamate release. Functionally, increases glutamate release in the striatum and decreases GABA concentration in the striatum. Increases glutamate release in the striatum. The chain is Proenkephalin-A (PENK) from Mesocricetus auratus (Golden hamster).